The chain runs to 367 residues: Inositol-3-phosphate synthase (367 aa).

Residues Asp-78, Ala-137, Tyr-157, Ser-200, Asp-235, and Lys-248 each coordinate NAD(+).

It belongs to the myo-inositol 1-phosphate synthase family. The cofactor is NAD(+).

It catalyses the reaction D-glucose 6-phosphate = 1D-myo-inositol 3-phosphate. Its function is as follows. Key enzyme in myo-inositol biosynthesis pathway that catalyzes the conversion of glucose 6-phosphate to 1D-myo-inositol 3-phosphate in a NAD-dependent manner. This is Inositol-3-phosphate synthase (ino1) from Mycobacterium tuberculosis (strain CDC 1551 / Oshkosh).